The primary structure comprises 177 residues: Transcription termination/antitermination protein NusG (177 aa).

The 26-residue stretch at 125–150 (EGENVRITEGPFANFTAIVEEYDMVR) folds into the KOW domain.

It belongs to the NusG family.

Functionally, participates in transcription elongation, termination and antitermination. This is Transcription termination/antitermination protein NusG from Campylobacter jejuni subsp. jejuni serotype O:2 (strain ATCC 700819 / NCTC 11168).